The sequence spans 488 residues: Altronate oxidoreductase (488 aa).

Residue 18 to 29 (VIQFGEGNFLRA) coordinates NAD(+).

The protein belongs to the mannitol dehydrogenase family. UxaB subfamily.

The catalysed reaction is D-altronate + NAD(+) = keto-D-tagaturonate + NADH + H(+). Its pathway is carbohydrate metabolism; pentose and glucuronate interconversion. The sequence is that of Altronate oxidoreductase from Pectobacterium carotovorum subsp. carotovorum (strain PC1).